Here is a 233-residue protein sequence, read N- to C-terminus: Small ribosomal subunit protein uS5 (233 aa).

Basic and acidic residues-rich tracts occupy residues Met-1–Asn-12 and Arg-39–Glu-54. The segment at Met-1–Glu-54 is disordered. An S5 DRBM domain is found at Leu-59 to Val-122.

Belongs to the universal ribosomal protein uS5 family. In terms of assembly, part of the 30S ribosomal subunit. Contacts proteins S4 and S8.

In terms of biological role, with S4 and S12 plays an important role in translational accuracy. Functionally, located at the back of the 30S subunit body where it stabilizes the conformation of the head with respect to the body. This chain is Small ribosomal subunit protein uS5, found in Zymomonas mobilis subsp. mobilis (strain ATCC 31821 / ZM4 / CP4).